The chain runs to 400 residues: MACAPGALGHRALWAVAWGLLLLVPVLAGAQRGRKKVVHVLEGESGSVVVQTAPGQVVSHRGGTIVLPCRYHYEAAAHGHDGVRLKWTKVVDPLAFADVFVALGPQHRAFGPYRGRAELQNDGPGDASLVLRNVTLQDYGRYECEVTNELEDDVGMVKLDLEGVVFPYHPRGGRYKMTFVEAQRACAEQDGILASAEQLHAAWRDGLDWCNAGWLRDGSVQYPVSHAREPCGGTGSTGAGGGTNGGVRNYGYRHNAEERYDAFCFTSNLPGRVFFLKPLRPVALAGAVRACAARGATVAKVGQLFAAWKLQLLDRCTAGWLADGSARYPIVNPRTRCGGPRPGVRSLGFPDASRRLFGVYCYRAPGAPDPAPGGWGWGWAGGGGWAGGSRDPAAWTPLRV.

Residues 1 to 30 form the signal peptide; the sequence is MACAPGALGHRALWAVAWGLLLLVPVLAGA. The 109-residue stretch at 47–155 folds into the Ig-like C2-type domain; the sequence is SVVVQTAPGQ…VTNELEDDVG (109 aa). Intrachain disulfides connect C69/C144, C186/C264, C210/C231, C291/C361, and C316/C337. Residue N133 is glycosylated (N-linked (GlcNAc...) asparagine). Link domains lie at 164–266 and 271–363; these read VVFP…FCFT and GRVF…YCYR.

It belongs to the HAPLN family. As to expression, expressed predominantly in brain where it is found mainly throughout the midbrain and hindbrain in a perineuronal net pattern.

It is found in the secreted. The protein resides in the extracellular space. The protein localises to the extracellular matrix. Functionally, essential for the proper localization of brevican (BCAN), mainly as a perineuronal nets (PNNs)-type deposition in the brainstem and cerebellum thereby playing a key role in the formation and structural organization of PNNs. Contributes to the formation and transmission of inhibitory GABAergic synapses between Purkinje cells and deep cerebellar nuclei neurons. The protein is Hyaluronan and proteoglycan link protein 4 (Hapln4) of Mus musculus (Mouse).